The primary structure comprises 160 residues: Cytochrome b6-f complex subunit 4 (160 aa).

The next 3 membrane-spanning stretches (helical) occupy residues 36 to 56, 95 to 115, and 131 to 151; these read LLYV…ALAV, LLGV…PFIE, and TVFL…ALPL.

It belongs to the cytochrome b family. PetD subfamily. The 4 large subunits of the cytochrome b6-f complex are cytochrome b6, subunit IV (17 kDa polypeptide, PetD), cytochrome f and the Rieske protein, while the 4 small subunits are PetG, PetL, PetM and PetN. The complex functions as a dimer.

The protein localises to the cellular thylakoid membrane. Component of the cytochrome b6-f complex, which mediates electron transfer between photosystem II (PSII) and photosystem I (PSI), cyclic electron flow around PSI, and state transitions. The sequence is that of Cytochrome b6-f complex subunit 4 from Desmonostoc sp. (strain PCC 7906) (Nostoc sp. (strain PCC 7906)).